The primary structure comprises 361 residues: Glutamate 5-kinase (361 aa).

Position 7 (lysine 7) interacts with ATP. The substrate site is built by serine 47, aspartate 134, and asparagine 146. ATP contacts are provided by residues 166–167 and 209–215; these read TD and TGGMTTK. In terms of domain architecture, PUA spans 274 to 345; sequence LGTLQLDEGA…EAIETQMSTN (72 aa).

Belongs to the glutamate 5-kinase family.

It localises to the cytoplasm. The enzyme catalyses L-glutamate + ATP = L-glutamyl 5-phosphate + ADP. It participates in amino-acid biosynthesis; L-proline biosynthesis; L-glutamate 5-semialdehyde from L-glutamate: step 1/2. In terms of biological role, catalyzes the transfer of a phosphate group to glutamate to form L-glutamate 5-phosphate. In Prochlorococcus marinus (strain MIT 9313), this protein is Glutamate 5-kinase.